A 305-amino-acid polypeptide reads, in one-letter code: Ornithine carbamoyltransferase (305 aa).

Carbamoyl phosphate contacts are provided by residues 54-57 (STRT), Q81, R105, and 132-135 (HPCQ). L-ornithine contacts are provided by residues N163, D220, and 224–225 (SM). Carbamoyl phosphate contacts are provided by residues 260-261 (CL) and R288.

Belongs to the aspartate/ornithine carbamoyltransferase superfamily. OTCase family.

The protein localises to the cytoplasm. The enzyme catalyses carbamoyl phosphate + L-ornithine = L-citrulline + phosphate + H(+). The protein operates within amino-acid biosynthesis; L-arginine biosynthesis; L-arginine from L-ornithine and carbamoyl phosphate: step 1/3. In terms of biological role, reversibly catalyzes the transfer of the carbamoyl group from carbamoyl phosphate (CP) to the N(epsilon) atom of ornithine (ORN) to produce L-citrulline. The protein is Ornithine carbamoyltransferase of Chromohalobacter salexigens (strain ATCC BAA-138 / DSM 3043 / CIP 106854 / NCIMB 13768 / 1H11).